Here is a 255-residue protein sequence, read N- to C-terminus: Tryptophan synthase alpha chain (255 aa).

Active-site proton acceptor residues include Glu-49 and Asp-60.

Belongs to the TrpA family. As to quaternary structure, tetramer of two alpha and two beta chains.

The catalysed reaction is (1S,2R)-1-C-(indol-3-yl)glycerol 3-phosphate + L-serine = D-glyceraldehyde 3-phosphate + L-tryptophan + H2O. It functions in the pathway amino-acid biosynthesis; L-tryptophan biosynthesis; L-tryptophan from chorismate: step 5/5. Its function is as follows. The alpha subunit is responsible for the aldol cleavage of indoleglycerol phosphate to indole and glyceraldehyde 3-phosphate. The sequence is that of Tryptophan synthase alpha chain from Desulfovibrio desulfuricans (strain ATCC 27774 / DSM 6949 / MB).